A 401-amino-acid chain; its full sequence is Argininosuccinate synthase (401 aa).

9 to 17 provides a ligand contact to ATP; sequence AYSGGLDTS. Residue Tyr86 coordinates L-citrulline. Gly116 provides a ligand contact to ATP. Residues Thr118, Asn122, and Asp123 each coordinate L-aspartate. Asn122 serves as a coordination point for L-citrulline. L-citrulline-binding residues include Arg126, Ser174, Ser183, Glu259, and Tyr271.

This sequence belongs to the argininosuccinate synthase family. Type 1 subfamily. As to quaternary structure, homotetramer.

It localises to the cytoplasm. It catalyses the reaction L-citrulline + L-aspartate + ATP = 2-(N(omega)-L-arginino)succinate + AMP + diphosphate + H(+). The protein operates within amino-acid biosynthesis; L-arginine biosynthesis; L-arginine from L-ornithine and carbamoyl phosphate: step 2/3. This Bacillus cereus (strain B4264) protein is Argininosuccinate synthase.